The sequence spans 102 residues: Pole-localizer protein TmaR (102 aa).

Residues 7–34 (IINQARRKNKLKRELQDNQKKIRDNQKR) are a coiled coil.

It belongs to the pole-localizer TmaR family.

It localises to the cytoplasm. Pole-localizer protein involved in the regulation of several cellular processes. This chain is Pole-localizer protein TmaR, found in Aliivibrio salmonicida (strain LFI1238) (Vibrio salmonicida (strain LFI1238)).